Here is a 509-residue protein sequence, read N- to C-terminus: tRNA-2-methylthio-N(6)-dimethylallyladenosine synthase (509 aa).

The segment covering 1–15 (MNEQQRLASQQVNSS) has biased composition (polar residues). The tract at residues 1-26 (MNEQQRLASQQVNSSTKKEEKDYSKY) is disordered. The span at 16-25 (TKKEEKDYSK) shows a compositional bias: basic and acidic residues. The region spanning 66–184 (RKFYIRTYGC…LPYILKDAMF (119 aa)) is the MTTase N-terminal domain. Residues C75, C111, C145, C221, C225, and C228 each contribute to the [4Fe-4S] cluster site. The Radical SAM core domain maps to 207 to 437 (RRGDIKAWVN…NALVNKLAIE (231 aa)). In terms of domain architecture, TRAM spans 440 to 503 (DRYKGQIVEV…TWSLNGELVE (64 aa)).

This sequence belongs to the methylthiotransferase family. MiaB subfamily. In terms of assembly, monomer. Requires [4Fe-4S] cluster as cofactor.

The protein resides in the cytoplasm. The catalysed reaction is N(6)-dimethylallyladenosine(37) in tRNA + (sulfur carrier)-SH + AH2 + 2 S-adenosyl-L-methionine = 2-methylsulfanyl-N(6)-dimethylallyladenosine(37) in tRNA + (sulfur carrier)-H + 5'-deoxyadenosine + L-methionine + A + S-adenosyl-L-homocysteine + 2 H(+). Catalyzes the methylthiolation of N6-(dimethylallyl)adenosine (i(6)A), leading to the formation of 2-methylthio-N6-(dimethylallyl)adenosine (ms(2)i(6)A) at position 37 in tRNAs that read codons beginning with uridine. This chain is tRNA-2-methylthio-N(6)-dimethylallyladenosine synthase, found in Bacillus thuringiensis (strain Al Hakam).